The chain runs to 244 residues: Heat shock transcription factor (244 aa).

The DNA-binding element occupies 13–108 (IPKFIMKLYK…LLGFDDSLRM (96 aa)). The interval 123–168 (DGSLKEIVEYLYVQNQELYTELSVCKERIERQERALNGLIEILSRV) is involved in trimerization. Residues 204–244 (EGCEPASPPLQDKGIPELSFKPGGIPHADSDTKDDNYDPFF) form a disordered region. A compositionally biased stretch (basic and acidic residues) spans 231 to 244 (ADSDTKDDNYDPFF).

It belongs to the HSF family. In terms of assembly, homotrimer. Homotrimerization increases the affinity of HSF1 to DNA.

It is found in the nucleus. DNA-binding transcription factor that specifically binds heat shock promoter elements (HSE) and activates transcription. The chain is Heat shock transcription factor from Encephalitozoon cuniculi (strain GB-M1) (Microsporidian parasite).